The sequence spans 526 residues: Vang-like protein 1 (526 aa).

The segment covering 1–15 (MDTESTYSGYSYYSS) has biased composition (low complexity). Residues 1-87 (MDTESTYSGY…TTAITGTSEH (87 aa)) are disordered. Residues 1 to 114 (MDTESTYSGY…VGLDCKRYLG (114 aa)) are Cytoplasmic-facing. Residues 75 to 87 (GETTTAITGTSEH) are compositionally biased toward polar residues. A phosphoserine mark is found at S88 and S90. A helical transmembrane segment spans residues 115-135 (LTVASFLGLLVFLTPIAFILL). Residues 136–153 (PQILWREELKPCGAICEG) lie on the Extracellular side of the membrane. The helical transmembrane segment at 154–174 (LLISVSFKLLILLIGTWALFF) threads the bilayer. At 175–184 (RKQRADVPRV) the chain is on the cytoplasmic side. The helical transmembrane segment at 185-205 (FVFRALLLVLIFLFVVSYWLF) threads the bilayer. The Extracellular segment spans residues 206-224 (YGVRILDSRDQNYKDIVQY). A helical membrane pass occupies residues 225-245 (AVSLVDALLFIHYLAIVLLEL). Topologically, residues 246–526 (RQLQPMFTLQ…VLRLQSETSV (281 aa)) are cytoplasmic.

It belongs to the Vang family. Heterodimer with Vangl2. Interacts through its C-terminal region with the N-terminal half of DVL1, DVL2 and DVL3. The PDZ domain of DVL1, DVL2 and DVL3 is required for the interaction.

The protein localises to the cell membrane. This chain is Vang-like protein 1 (Vangl1), found in Mus musculus (Mouse).